Reading from the N-terminus, the 139-residue chain is D-ribose pyranase (139 aa).

The Proton donor role is filled by His20. Substrate-binding positions include Asp28, His106, and Tyr128–Asn130.

This sequence belongs to the RbsD / FucU family. RbsD subfamily. As to quaternary structure, homodecamer.

It localises to the cytoplasm. It carries out the reaction beta-D-ribopyranose = beta-D-ribofuranose. The protein operates within carbohydrate metabolism; D-ribose degradation; D-ribose 5-phosphate from beta-D-ribopyranose: step 1/2. Functionally, catalyzes the interconversion of beta-pyran and beta-furan forms of D-ribose. The protein is D-ribose pyranase of Enterobacter sp. (strain 638).